Consider the following 83-residue polypeptide: UPF0297 protein Moth_1643 (83 aa).

The protein belongs to the UPF0297 family.

The protein is UPF0297 protein Moth_1643 of Moorella thermoacetica (strain ATCC 39073 / JCM 9320).